Consider the following 729-residue polypeptide: Isocitrate dehydrogenase [NADP] (729 aa).

NADP(+)-binding residues include N83 and S85. Residues S121, N124, R128, R134, and K244 each contribute to the D-threo-isocitrate site. Residue N124 participates in NADP(+) binding. A Mg(2+)-binding site is contributed by D337. D-threo-isocitrate contacts are provided by Y407 and R534. Positions 535 and 539 each coordinate Mg(2+). NADP(+)-binding residues include S572, H576, R587, D589, and R636.

This sequence belongs to the monomeric-type IDH family. In terms of assembly, monomer. The cofactor is Mg(2+). Mn(2+) serves as cofactor.

The enzyme catalyses D-threo-isocitrate + NADP(+) = 2-oxoglutarate + CO2 + NADPH. Functionally, catalyzes the oxidative decarboxylation of isocitrate to 2-oxoglutarate and carbon dioxide with the concomitant reduction of NADP(+). The sequence is that of Isocitrate dehydrogenase [NADP] from Corynebacterium efficiens (strain DSM 44549 / YS-314 / AJ 12310 / JCM 11189 / NBRC 100395).